The primary structure comprises 173 residues: Adenine phosphoribosyltransferase (173 aa).

The protein belongs to the purine/pyrimidine phosphoribosyltransferase family. In terms of assembly, homodimer.

The protein resides in the cytoplasm. The enzyme catalyses AMP + diphosphate = 5-phospho-alpha-D-ribose 1-diphosphate + adenine. Its pathway is purine metabolism; AMP biosynthesis via salvage pathway; AMP from adenine: step 1/1. Catalyzes a salvage reaction resulting in the formation of AMP, that is energically less costly than de novo synthesis. This is Adenine phosphoribosyltransferase from Petrotoga mobilis (strain DSM 10674 / SJ95).